The sequence spans 203 residues: Outer-membrane lipoprotein carrier protein (203 aa).

The N-terminal stretch at 1–21 (MKKLLVACCLLSGFASTSVLA) is a signal peptide.

Belongs to the LolA family. Monomer.

It localises to the periplasm. Its function is as follows. Participates in the translocation of lipoproteins from the inner membrane to the outer membrane. Only forms a complex with a lipoprotein if the residue after the N-terminal Cys is not an aspartate (The Asp acts as a targeting signal to indicate that the lipoprotein should stay in the inner membrane). This Serratia proteamaculans (strain 568) protein is Outer-membrane lipoprotein carrier protein.